Here is a 193-residue protein sequence, read N- to C-terminus: NAD(P)H-quinone oxidoreductase subunit I (193 aa).

2 4Fe-4S ferredoxin-type domains span residues Gly56 to Glu85 and Lys96 to Glu125. Cys65, Cys68, Cys71, Cys75, Cys105, Cys108, Cys111, and Cys115 together coordinate [4Fe-4S] cluster. A disordered region spans residues Asn174–Glu193. Over residues Gln184–Glu193 the composition is skewed to basic and acidic residues.

It belongs to the complex I 23 kDa subunit family. As to quaternary structure, NDH-1 is composed of at least 11 different subunits. [4Fe-4S] cluster is required as a cofactor.

It is found in the cellular thylakoid membrane. It carries out the reaction a plastoquinone + NADH + (n+1) H(+)(in) = a plastoquinol + NAD(+) + n H(+)(out). The enzyme catalyses a plastoquinone + NADPH + (n+1) H(+)(in) = a plastoquinol + NADP(+) + n H(+)(out). In terms of biological role, NDH-1 shuttles electrons from an unknown electron donor, via FMN and iron-sulfur (Fe-S) centers, to quinones in the respiratory and/or the photosynthetic chain. The immediate electron acceptor for the enzyme in this species is believed to be plastoquinone. Couples the redox reaction to proton translocation, and thus conserves the redox energy in a proton gradient. This is NAD(P)H-quinone oxidoreductase subunit I from Synechocystis sp. (strain ATCC 27184 / PCC 6803 / Kazusa).